The primary structure comprises 247 residues: Pyridoxine 5'-phosphate synthase (247 aa).

3-amino-2-oxopropyl phosphate is bound at residue asparagine 12. Residue 14 to 15 coordinates 1-deoxy-D-xylulose 5-phosphate; that stretch reads DH. Arginine 23 is a 3-amino-2-oxopropyl phosphate binding site. Histidine 48 acts as the Proton acceptor in catalysis. Residues arginine 50 and histidine 55 each coordinate 1-deoxy-D-xylulose 5-phosphate. The Proton acceptor role is filled by glutamate 75. Threonine 105 provides a ligand contact to 1-deoxy-D-xylulose 5-phosphate. The active-site Proton donor is the histidine 196. Residues glycine 197 and 218 to 219 each bind 3-amino-2-oxopropyl phosphate; that span reads GH.

It belongs to the PNP synthase family. In terms of assembly, homooctamer; tetramer of dimers.

Its subcellular location is the cytoplasm. The catalysed reaction is 3-amino-2-oxopropyl phosphate + 1-deoxy-D-xylulose 5-phosphate = pyridoxine 5'-phosphate + phosphate + 2 H2O + H(+). Its pathway is cofactor biosynthesis; pyridoxine 5'-phosphate biosynthesis; pyridoxine 5'-phosphate from D-erythrose 4-phosphate: step 5/5. In terms of biological role, catalyzes the complicated ring closure reaction between the two acyclic compounds 1-deoxy-D-xylulose-5-phosphate (DXP) and 3-amino-2-oxopropyl phosphate (1-amino-acetone-3-phosphate or AAP) to form pyridoxine 5'-phosphate (PNP) and inorganic phosphate. This is Pyridoxine 5'-phosphate synthase from Pseudomonas fluorescens (strain Pf0-1).